The primary structure comprises 142 residues: ATP synthase epsilon chain (142 aa).

This sequence belongs to the ATPase epsilon chain family. As to quaternary structure, F-type ATPases have 2 components, CF(1) - the catalytic core - and CF(0) - the membrane proton channel. CF(1) has five subunits: alpha(3), beta(3), gamma(1), delta(1), epsilon(1). CF(0) has three main subunits: a, b and c.

The protein resides in the cell inner membrane. Its function is as follows. Produces ATP from ADP in the presence of a proton gradient across the membrane. The protein is ATP synthase epsilon chain of Maridesulfovibrio salexigens (strain ATCC 14822 / DSM 2638 / NCIMB 8403 / VKM B-1763) (Desulfovibrio salexigens).